Reading from the N-terminus, the 336-residue chain is tRNA pseudouridine synthase D (336 aa).

Asp-84 serves as the catalytic Nucleophile. Residues 164-298 form the TRUD domain; that stretch reads GVPNYFGEQR…TPSYRWLVGD (135 aa).

Belongs to the pseudouridine synthase TruD family.

The enzyme catalyses uridine(13) in tRNA = pseudouridine(13) in tRNA. Its function is as follows. Responsible for synthesis of pseudouridine from uracil-13 in transfer RNAs. The polypeptide is tRNA pseudouridine synthase D (Cellvibrio japonicus (strain Ueda107) (Pseudomonas fluorescens subsp. cellulosa)).